The chain runs to 527 residues: Inorganic phosphate transporter 1-1 (527 aa).

The Cytoplasmic segment spans residues 1-21; that stretch reads MAGGQLNVLSTLDQAKTQWYH. The helical transmembrane segment at 22 to 42 threads the bilayer; that stretch reads FMAIVIAGMGFFTDAYDLFCI. At 43 to 70 the chain is on the extracellular side; that stretch reads SLVTKLLGRIYYTDDSKDTPGALPPNVS. The helical transmembrane segment at 71-91 threads the bilayer; the sequence is AAVTGVALCGTLAGQLFFGWL. Over 92–99 the chain is Cytoplasmic; sequence GDKLGRKS. The chain crosses the membrane as a helical span at residues 100–120; it reads VYGFTLILMVVCSVASGLSFG. Topologically, residues 121–124 are extracellular; sequence SSAK. Residues 125 to 145 form a helical membrane-spanning segment; sequence GVVSTLCFFRFWLGFGIGGDY. Topologically, residues 146–163 are cytoplasmic; that stretch reads PLSATIMSEYANKRTRGA. Residues 164 to 184 traverse the membrane as a helical segment; the sequence is FIAAVFAMQGFGILFGAIVAL. Topologically, residues 185–211 are extracellular; that stretch reads AVSAGFRHAYPAPSYSDNHAASLVPQA. A helical membrane pass occupies residues 212-232; the sequence is DYVWRIILMFGTVPAALTYYW. The Cytoplasmic portion of the chain corresponds to 233–292; the sequence is RMKMPETARYTALIARNAKQAAADMSKVLHTQIEESADRAETVAVGGESWGLFSRQFLRR. Residues 293 to 313 traverse the membrane as a helical segment; sequence HGLHLLATTSTWFLLDIAFYS. At 314–348 the chain is on the extracellular side; sequence QNLFQKDIFSKVGWIPPAKTMNALEELYRIARAQA. Residues 349-369 traverse the membrane as a helical segment; it reads LIALCGTIPGYWFTVAFIEIM. The Cytoplasmic portion of the chain corresponds to 370–371; it reads GR. Residues 372-392 traverse the membrane as a helical segment; the sequence is FWIQIMGFAMMTAFMLGLAIP. Topologically, residues 393–405 are extracellular; the sequence is YHHWTTPGHHTGF. A helical transmembrane segment spans residues 406–426; sequence IVMYGFTFFFANFGPNSTTFI. Residues 427–442 are Cytoplasmic-facing; that stretch reads VPAEIYPARLRSTCHG. The helical transmembrane segment at 443 to 463 threads the bilayer; the sequence is ISAAAGKAGAIIGAFGFLYAA. The Extracellular segment spans residues 464–481; the sequence is QDQHKPEPGYPRGIGIKN. Residues 482-502 form a helical membrane-spanning segment; that stretch reads ALFVLAGTNFLGTIMTLLVPE. Over 503–527 the chain is Cytoplasmic; that stretch reads SKGMSLEVISQEVADGDDEEAAYPK.

This sequence belongs to the major facilitator superfamily. Phosphate:H(+) symporter (TC 2.A.1.9) family. Expressed in roots, stems and leaves.

It is found in the membrane. Its function is as follows. High-affinity transporter for external inorganic phosphate. Required for phosphate acquisition in plant. This is Inorganic phosphate transporter 1-1 (PHT1-1) from Oryza sativa subsp. japonica (Rice).